Reading from the N-terminus, the 411-residue chain is Na(+)-translocating NADH-quinone reductase subunit B (411 aa).

The next 3 helical transmembrane spans lie at 56–76 (MMITVFLALFPAIFYGMYNVG), 120–140 (ALGAIFFLPIYLVVFTVCTIW), and 166–186 (IVPPTLPLWQAALGITFGIIV). FMN phosphoryl threonine is present on T233. 5 helical membrane-spanning segments follow: residues 272–292 (VSTLAILIGGAVIVFTRIAAW), 294–314 (IIAGVMIGMIATSTLFNLIGS), 319–339 (MFSMPWHWHFVLGGFALGMVF), 348–368 (SFTNTGKWWYGALIGVMAVLI), and 378–398 (GMMLAILFANLFAPIFDYIVV).

It belongs to the NqrB/RnfD family. As to quaternary structure, composed of six subunits; NqrA, NqrB, NqrC, NqrD, NqrE and NqrF. The cofactor is FMN.

It is found in the cell inner membrane. It carries out the reaction a ubiquinone + n Na(+)(in) + NADH + H(+) = a ubiquinol + n Na(+)(out) + NAD(+). NQR complex catalyzes the reduction of ubiquinone-1 to ubiquinol by two successive reactions, coupled with the transport of Na(+) ions from the cytoplasm to the periplasm. NqrA to NqrE are probably involved in the second step, the conversion of ubisemiquinone to ubiquinol. The polypeptide is Na(+)-translocating NADH-quinone reductase subunit B (Haemophilus influenzae (strain 86-028NP)).